The sequence spans 20 residues: Hemocyanin subunit Ib (20 aa).

Residues 1 to 20 are disordered; sequence DSVGSTTAHKQQNINHLLDK.

It belongs to the tyrosinase family. Hemocyanin subfamily. As to quaternary structure, composed of 3 major subunits (IB, II and III) and 1 minor subunit (IA) which form homohexamers and heterohexamers. May also form larger structures. As to expression, hemolymph.

It localises to the secreted. The protein localises to the extracellular space. In terms of biological role, hemocyanins are copper-containing oxygen carriers occurring freely dissolved in the hemolymph of many mollusks and arthropods. The protein is Hemocyanin subunit Ib of Panulirus japonicus (Japanese spiny lobster).